We begin with the raw amino-acid sequence, 155 residues long: Transcriptional regulator MraZ (155 aa).

2 SpoVT-AbrB domains span residues 5 to 52 (TYEN…SQDR) and 81 to 124 (SMNL…EPAA).

Belongs to the MraZ family. Forms oligomers.

Its subcellular location is the cytoplasm. It localises to the nucleoid. This is Transcriptional regulator MraZ from Pelagibacter ubique (strain HTCC1062).